The primary structure comprises 163 residues: Retinoic acid receptor responder protein 2 (163 aa).

Residues 1-20 (MRRLLIPLALWLGAVGVGVA) form the signal peptide. Intrachain disulfides connect Cys-77–Cys-87, Cys-98–Cys-117, and Cys-101–Cys-135. Positions 158 to 163 (KALPRS) are excised as a propeptide.

Secreted in an inactive precursor form, prochemerin, which is proteolytically processed by a variety of extracellular proteases to generate forms with differing levels of bioactivity. For example, the removal of six amino acids results in chemerin-157, which exhibits the highest activity, while removal of seven amino acids results in chemerin-156 which has slightly less activity. Some proteases are able to cleave at more than one site and chemerin forms may be sequentially processed by different enzymes to modulate activity levels. The coordinated expression and activity of chemerin-modifying enzymes is essential for regulating its bioactivation, inactivation and, consequently, biological function. Cathepsin G cleaves seven C-terminal amino acids from prochemerin (chemerin-156), elastase is able to cleave six (chemerin-157), eight (chemerin-155) or eleven (chemerin-152), plasmin cleaves five amino acids (chemerin-158), and tryptase cleaves five (chemerin-158) or eight (chemerin-155). Multiple cleavages might be required to fully activate chemerin, with an initial tryptase cleavage resulting in chemerin with low activity (chemerin-158), and a second cleavage by carboxypeptidase N or B producing highly active chemerin (chemerin-157). In terms of tissue distribution, expressed at the highest levels in placenta, liver, and white adipose tissue (WAT), and to a lesser extent in many other tissues such as lung, brown adipose tissue, heart, ovary, kidney, skeletal muscle and pancreas. Within WAT, expression is enriched in adipocytes as compared to the stromal vascular fraction. Expression and secretion increases dramatically with adipogenesis. Highly expressed in skin (basal and suprabasal layers of the epidermis, hair follicles and endothelial cells). Expression is elevated in numerous metabolic and inflammatory diseases including psoriasis, obesity, type 2 diabetes, metabolic syndrome and cardiovascular disease.

The protein resides in the secreted. Functionally, adipocyte-secreted protein (adipokine) that regulates adipogenesis, metabolism and inflammation through activation of the chemokine-like receptor 1 (CMKLR1). Also acts as a ligand for CMKLR2. Can also bind to C-C chemokine receptor-like 2 (CCRL2), but with a lower affinity than it does to CMKLR1 or CMKLR2. Positively regulates adipocyte differentiation, modulates the expression of adipocyte genes involved in lipid and glucose metabolism and might play a role in angiogenesis, a process essential for the expansion of white adipose tissue. Also acts as a pro-inflammatory adipokine, causing an increase in secretion of pro-inflammatory and prodiabetic adipokines, which further impair adipose tissue metabolic function and have negative systemic effects including impaired insulin sensitivity, altered glucose and lipid metabolism, and a decrease in vascular function in other tissues. Can have both pro- and anti-inflammatory properties depending on the modality of enzymatic cleavage by different classes of proteases. Acts as a chemotactic factor for leukocyte populations expressing CMKLR1, particularly immature plasmacytoid dendritic cells, but also immature myeloid DCs, macrophages and natural killer cells. Exerts an anti-inflammatory role by preventing TNF/TNFA-induced VCAM1 expression and monocytes adhesion in vascular endothelial cells. The effect is mediated via inhibiting activation of NF-kappa-B and CRK/p38 through stimulation of AKT1/NOS3 signaling and nitric oxide production. Its dual role in inflammation and metabolism might provide a link between chronic inflammation and obesity, as well as obesity-related disorders such as type 2 diabetes and cardiovascular disease. Exhibits an antimicrobial function in the skin. The protein is Retinoic acid receptor responder protein 2 (RARRES2) of Homo sapiens (Human).